Reading from the N-terminus, the 491-residue chain is UDP-N-acetylmuramate--L-alanine ligase (491 aa).

126-132 serves as a coordination point for ATP; sequence GTHGKTT.

This sequence belongs to the MurCDEF family.

Its subcellular location is the cytoplasm. The enzyme catalyses UDP-N-acetyl-alpha-D-muramate + L-alanine + ATP = UDP-N-acetyl-alpha-D-muramoyl-L-alanine + ADP + phosphate + H(+). Its pathway is cell wall biogenesis; peptidoglycan biosynthesis. Its function is as follows. Cell wall formation. The chain is UDP-N-acetylmuramate--L-alanine ligase from Salmonella agona (strain SL483).